A 104-amino-acid polypeptide reads, in one-letter code: Flagellar hook-basal body complex protein FliE (104 aa).

It belongs to the FliE family.

Its subcellular location is the bacterial flagellum basal body. This chain is Flagellar hook-basal body complex protein FliE, found in Escherichia coli (strain 55989 / EAEC).